The primary structure comprises 262 residues: Catechol O-methyltransferase domain-containing protein 1 (262 aa).

Residues 12 to 32 traverse the membrane as a helical; Signal-anchor for type II membrane protein segment; that stretch reads AALALGSAALGAAFATGLLLG. Residues aspartate 108, 110 to 111, serine 116, glutamate 134, valine 135, alanine 163, aspartate 185, aspartate 187, and tyrosine 194 contribute to the S-adenosyl-L-methionine site; that span reads GT.

Belongs to the class I-like SAM-binding methyltransferase superfamily. Cation-dependent O-methyltransferase family. As to quaternary structure, homodimer.

The protein localises to the membrane. Putative O-methyltransferase. This is Catechol O-methyltransferase domain-containing protein 1 (Comtd1) from Mus musculus (Mouse).